The chain runs to 179 residues: Large ribosomal subunit protein uL10 (179 aa).

The interval 137–179 (KEELYAMLVGRVKAPITGLVFALSGILRNLVYVLNAIKEKKSE) is binds L7/L12 dimers.

In terms of assembly, part of the ribosomal stalk of the 50S ribosomal subunit. The N-terminus interacts with L11 and 23S rRNA to form the base of the stalk. The C-terminus forms an elongated spine to which 3 L12 dimers bind in a sequential fashion forming a heptameric L10(L12)2(L12)2(L12)2 complex.

Its function is as follows. Forms part of the ribosomal stalk, playing a central role in the interaction of the ribosome with GTP-bound translation factors (such as IF-2, EF-Tu, EF-G and RF3). This chain is Large ribosomal subunit protein uL10 (rplJ), found in Thermotoga maritima (strain ATCC 43589 / DSM 3109 / JCM 10099 / NBRC 100826 / MSB8).